We begin with the raw amino-acid sequence, 147 residues long: Large ribosomal subunit protein uL15 (147 aa).

The tract at residues 1-55 (MKLHEIAPQPGSTKRRRRVGRGVSAGQGASCGLGMRGQKSRSGTGTRPGFEGGQM) is disordered. Over residues 23-35 (VSAGQGASCGLGM) the composition is skewed to gly residues.

It belongs to the universal ribosomal protein uL15 family. In terms of assembly, part of the 50S ribosomal subunit.

Binds to the 23S rRNA. The sequence is that of Large ribosomal subunit protein uL15 from Microcystis aeruginosa (strain NIES-843 / IAM M-2473).